The primary structure comprises 409 residues: Lipoyl synthase, mitochondrial (409 aa).

The tract at residues 21-41 is disordered; sequence QQQVPPSEEPRNESGAANPPL. [4Fe-4S] cluster is bound by residues Cys-125, Cys-130, Cys-136, Cys-159, Cys-163, Cys-166, and Ser-375. One can recognise a Radical SAM core domain in the interval 142–364; the sequence is EEGDGTATAT…EKEALDMGFL (223 aa).

Belongs to the radical SAM superfamily. Lipoyl synthase family. It depends on [4Fe-4S] cluster as a cofactor.

The protein resides in the mitochondrion. It catalyses the reaction [[Fe-S] cluster scaffold protein carrying a second [4Fe-4S](2+) cluster] + N(6)-octanoyl-L-lysyl-[protein] + 2 oxidized [2Fe-2S]-[ferredoxin] + 2 S-adenosyl-L-methionine + 4 H(+) = [[Fe-S] cluster scaffold protein] + N(6)-[(R)-dihydrolipoyl]-L-lysyl-[protein] + 4 Fe(3+) + 2 hydrogen sulfide + 2 5'-deoxyadenosine + 2 L-methionine + 2 reduced [2Fe-2S]-[ferredoxin]. The protein operates within protein modification; protein lipoylation via endogenous pathway; protein N(6)-(lipoyl)lysine from octanoyl-[acyl-carrier-protein]: step 2/2. Catalyzes the radical-mediated insertion of two sulfur atoms into the C-6 and C-8 positions of the octanoyl moiety bound to the lipoyl domains of lipoate-dependent enzymes, thereby converting the octanoylated domains into lipoylated derivatives. This is Lipoyl synthase, mitochondrial from Trypanosoma brucei gambiense (strain MHOM/CI/86/DAL972).